We begin with the raw amino-acid sequence, 59 residues long: MITTLTCPRCRAETVWEGNPHRPFCSARCKTVDLAAWADEEYRIAGPEAPSDNDENDRE.

Residues Cys7, Cys10, Cys25, and Cys29 each contribute to the Zn(2+) site.

The protein belongs to the DNA gyrase inhibitor YacG family. In terms of assembly, interacts with GyrB. The cofactor is Zn(2+).

In terms of biological role, inhibits all the catalytic activities of DNA gyrase by preventing its interaction with DNA. Acts by binding directly to the C-terminal domain of GyrB, which probably disrupts DNA binding by the gyrase. The chain is DNA gyrase inhibitor YacG from Geobacter sulfurreducens (strain ATCC 51573 / DSM 12127 / PCA).